A 256-amino-acid chain; its full sequence is Deoxyribose-phosphate aldolase (256 aa).

The active-site Proton donor/acceptor is the Asp-102. The Schiff-base intermediate with acetaldehyde role is filled by Lys-165. Lys-197 serves as the catalytic Proton donor/acceptor.

The protein belongs to the DeoC/FbaB aldolase family. DeoC type 2 subfamily.

It localises to the cytoplasm. It catalyses the reaction 2-deoxy-D-ribose 5-phosphate = D-glyceraldehyde 3-phosphate + acetaldehyde. Its pathway is carbohydrate degradation; 2-deoxy-D-ribose 1-phosphate degradation; D-glyceraldehyde 3-phosphate and acetaldehyde from 2-deoxy-alpha-D-ribose 1-phosphate: step 2/2. Functionally, catalyzes a reversible aldol reaction between acetaldehyde and D-glyceraldehyde 3-phosphate to generate 2-deoxy-D-ribose 5-phosphate. The sequence is that of Deoxyribose-phosphate aldolase from Shewanella oneidensis (strain ATCC 700550 / JCM 31522 / CIP 106686 / LMG 19005 / NCIMB 14063 / MR-1).